A 348-amino-acid polypeptide reads, in one-letter code: Holliday junction branch migration complex subunit RuvB (348 aa).

Positions 4-184 are large ATPase domain (RuvB-L); the sequence is TDRLIAASGR…FGIVQRLEFY (181 aa). ATP-binding positions include I23, R24, G65, K68, T69, T70, 131 to 133, R174, Y184, and R221; that span reads EDF. Residue T69 participates in Mg(2+) binding. The segment at 185–255 is small ATPAse domain (RuvB-S); that stretch reads SNKDLATIVS…VADMALNLLD (71 aa). Residues 258–348 are head domain (RuvB-H); sequence ERGFDHSDRR…GGEYAAQDDE (91 aa). DNA-binding residues include R294, R313, and R318.

It belongs to the RuvB family. Homohexamer. Forms an RuvA(8)-RuvB(12)-Holliday junction (HJ) complex. HJ DNA is sandwiched between 2 RuvA tetramers; dsDNA enters through RuvA and exits via RuvB. An RuvB hexamer assembles on each DNA strand where it exits the tetramer. Each RuvB hexamer is contacted by two RuvA subunits (via domain III) on 2 adjacent RuvB subunits; this complex drives branch migration. In the full resolvosome a probable DNA-RuvA(4)-RuvB(12)-RuvC(2) complex forms which resolves the HJ.

It localises to the cytoplasm. The enzyme catalyses ATP + H2O = ADP + phosphate + H(+). Functionally, the RuvA-RuvB-RuvC complex processes Holliday junction (HJ) DNA during genetic recombination and DNA repair, while the RuvA-RuvB complex plays an important role in the rescue of blocked DNA replication forks via replication fork reversal (RFR). RuvA specifically binds to HJ cruciform DNA, conferring on it an open structure. The RuvB hexamer acts as an ATP-dependent pump, pulling dsDNA into and through the RuvAB complex. RuvB forms 2 homohexamers on either side of HJ DNA bound by 1 or 2 RuvA tetramers; 4 subunits per hexamer contact DNA at a time. Coordinated motions by a converter formed by DNA-disengaged RuvB subunits stimulates ATP hydrolysis and nucleotide exchange. Immobilization of the converter enables RuvB to convert the ATP-contained energy into a lever motion, pulling 2 nucleotides of DNA out of the RuvA tetramer per ATP hydrolyzed, thus driving DNA branch migration. The RuvB motors rotate together with the DNA substrate, which together with the progressing nucleotide cycle form the mechanistic basis for DNA recombination by continuous HJ branch migration. Branch migration allows RuvC to scan DNA until it finds its consensus sequence, where it cleaves and resolves cruciform DNA. In Pseudomonas entomophila (strain L48), this protein is Holliday junction branch migration complex subunit RuvB.